The following is a 417-amino-acid chain: RH-like protein IC (417 aa).

The next 11 helical transmembrane spans lie at 12–32 (CLPLCALTLEAALILLFYFFT), 44–64 (LVASYQVGQDLTVMAAIGFGF), 77–97 (VAFNLFMLALGVQWAILLDGF), 125–145 (ISAGAVLGYVNLVQLVVMVLV), 172–192 (FYVFAAYFGVTVAWCLPKPLP), 203–223 (TIPSLSAMLGTLFLWMFWPSF), 238–258 (VFNTYYALAVSVVTAISVSSL), 265–285 (INMTYMHNAVLAGGVAVGTSC), 287–307 (LITSPWLAMVLGLVAGLISIG), 331–351 (NFSLLGLLGEITYIVLMVLHT), and 358–378 (MVGFQVLVSTGELSLALAIAV).

It belongs to the ammonium transporter (TC 2.A.49) family. Rh subfamily.

It localises to the membrane. May be part of an oligomeric complex which is likely to have a transport or channel function in the erythrocyte membrane. This is RH-like protein IC from Gorilla gorilla gorilla (Western lowland gorilla).